Consider the following 192-residue polypeptide: uncharacterized protein (192 aa).

The segment at 17 to 73 (MLRGSGKKPIQRLAKAPAATASSKTSEWRATTAYGFLPAGGDVRPHSPRYESQGVLS) is disordered. Positions 30–41 (AKAPAATASSKT) are enriched in low complexity.

This is an uncharacterized protein from Sinorhizobium fredii (strain NBRC 101917 / NGR234).